A 195-amino-acid chain; its full sequence is Exosome complex component CSL4 (195 aa).

Phosphoserine is present on residues serine 21 and serine 98. The region spanning 66–147 is the S1 motif domain; it reads DVGAIVTCKV…AQSNYLLTTA (82 aa).

The protein belongs to the CSL4 family. Component of the RNA exosome core complex (Exo-9), composed of EXOSC1, EXOSC2, EXOSC3, EXOSC4, EXOSC5, EXOSC6, EXOSC7, EXOSC8 and EXOSC9; within the complex interacts with EXOSC6. The catalytically inactive RNA exosome core complex (Exo-9) associates with the catalytic subunit EXOSC10/RRP6. Exo-9 may associate with DIS3 to form the nucleolar exosome complex, or DIS3L to form the cytoplasmic exosome complex. Exo-9 is formed by a hexameric base ring consisting of the heterodimers EXOSC4-EXOSC9, EXOSC5-EXOSC8 and EXOSC6-EXOSC7, and a cap ring consisting of EXOSC1, EXOSC2 and EXOSC3. The RNA exosome complex associates with cofactors C1D/RRP47, MPHOSPH6/MPP6 and MTREX/MTR4. Interacts with DDX60.

The protein resides in the nucleus. It localises to the nucleolus. Its subcellular location is the cytoplasm. Non-catalytic component of the RNA exosome complex which has 3'-&gt;5' exoribonuclease activity and participates in a multitude of cellular RNA processing and degradation events. In the nucleus, the RNA exosome complex is involved in proper maturation of stable RNA species such as rRNA, snRNA and snoRNA, in the elimination of RNA processing by-products and non-coding 'pervasive' transcripts, such as antisense RNA species and promoter-upstream transcripts (PROMPTs), and of mRNAs with processing defects, thereby limiting or excluding their export to the cytoplasm. The RNA exosome may be involved in Ig class switch recombination (CSR) and/or Ig variable region somatic hypermutation (SHM) by targeting AICDA deamination activity to transcribed dsDNA substrates. In the cytoplasm, the RNA exosome complex is involved in general mRNA turnover and specifically degrades inherently unstable mRNAs containing AU-rich elements (AREs) within their 3' untranslated regions, and in RNA surveillance pathways, preventing translation of aberrant mRNAs. It seems to be involved in degradation of histone mRNA. The catalytic inactive RNA exosome core complex of 9 subunits (Exo-9) is proposed to play a pivotal role in the binding and presentation of RNA for ribonucleolysis, and to serve as a scaffold for the association with catalytic subunits and accessory proteins or complexes. EXOSC1 as peripheral part of the Exo-9 complex stabilizes the hexameric ring of RNase PH-domain subunits through contacts with EXOSC6 and EXOSC8. In Homo sapiens (Human), this protein is Exosome complex component CSL4 (EXOSC1).